Here is a 298-residue protein sequence, read N- to C-terminus: Thymidylate synthase (298 aa).

Residues arginine 25 and 159-160 contribute to the dUMP site; that span reads RR. Residue cysteine 179 is the Nucleophile of the active site. DUMP-binding positions include 200–203, asparagine 211, and 241–243; these read RSVD and HLY. Aspartate 203 serves as a coordination point for (6R)-5,10-methylene-5,6,7,8-tetrahydrofolate. Position 297 (alanine 297) interacts with (6R)-5,10-methylene-5,6,7,8-tetrahydrofolate.

It belongs to the thymidylate synthase family. Bacterial-type ThyA subfamily. As to quaternary structure, homodimer.

The protein resides in the cytoplasm. It carries out the reaction dUMP + (6R)-5,10-methylene-5,6,7,8-tetrahydrofolate = 7,8-dihydrofolate + dTMP. It participates in pyrimidine metabolism; dTTP biosynthesis. Functionally, catalyzes the reductive methylation of 2'-deoxyuridine-5'-monophosphate (dUMP) to 2'-deoxythymidine-5'-monophosphate (dTMP) while utilizing 5,10-methylenetetrahydrofolate (mTHF) as the methyl donor and reductant in the reaction, yielding dihydrofolate (DHF) as a by-product. This enzymatic reaction provides an intracellular de novo source of dTMP, an essential precursor for DNA biosynthesis. The sequence is that of Thymidylate synthase from Cereibacter sphaeroides (strain ATCC 17025 / ATH 2.4.3) (Rhodobacter sphaeroides).